A 257-amino-acid chain; its full sequence is MLAKRIIPCLDVRNGQVVKGVQFRNHEIIGDIVPLAARYAEEGADELVFYDITASSDGRTVDKSWVERVAEVIDIPFCVAGGIKTIADAEQIFTFGADKISINSPALADPDLISRLADRFGVQAIVVGIDSWFEQETGKYWVNQYTGDESRTRQTNWQLLDWVKEVQKRGAGEIVLNMMNQDGVRNGYDLTQLKLVRDVCKVPLIASGGAGEMVHFRDAFIEANVDGALAASVFHKQIINIGELKEYLAREGVEVRR.

Active-site residues include Asp11 and Asp130.

This sequence belongs to the HisA/HisF family. Heterodimer of HisH and HisF.

Its subcellular location is the cytoplasm. The enzyme catalyses 5-[(5-phospho-1-deoxy-D-ribulos-1-ylimino)methylamino]-1-(5-phospho-beta-D-ribosyl)imidazole-4-carboxamide + L-glutamine = D-erythro-1-(imidazol-4-yl)glycerol 3-phosphate + 5-amino-1-(5-phospho-beta-D-ribosyl)imidazole-4-carboxamide + L-glutamate + H(+). The protein operates within amino-acid biosynthesis; L-histidine biosynthesis; L-histidine from 5-phospho-alpha-D-ribose 1-diphosphate: step 5/9. Functionally, IGPS catalyzes the conversion of PRFAR and glutamine to IGP, AICAR and glutamate. The HisF subunit catalyzes the cyclization activity that produces IGP and AICAR from PRFAR using the ammonia provided by the HisH subunit. This chain is Imidazole glycerol phosphate synthase subunit HisF, found in Mannheimia succiniciproducens (strain KCTC 0769BP / MBEL55E).